The sequence spans 359 residues: Peptide chain release factor 1 (359 aa).

An N5-methylglutamine modification is found at Q233.

Belongs to the prokaryotic/mitochondrial release factor family. Methylated by PrmC. Methylation increases the termination efficiency of RF1.

The protein localises to the cytoplasm. In terms of biological role, peptide chain release factor 1 directs the termination of translation in response to the peptide chain termination codons UAG and UAA. In Orientia tsutsugamushi (strain Boryong) (Rickettsia tsutsugamushi), this protein is Peptide chain release factor 1.